A 727-amino-acid polypeptide reads, in one-letter code: MSFNFSRYSGAYTTTFSFLLLALLIVSAVLLSRPYAPALLHAEEAYCVSMSCVTAAASVLSLMDATADPCSDFYQYACGGWVRANPIPDTKSMWGTFVKLEQQNQLVIKNVLEQPMSEFKSEAERKAKLYYMSCLDVNDTIETLGPKPMLDLLVKIGGWNITGNFSIKNWSLQKSLETLQNRYNMGGLFTWAVGEDDRDSKKHIIQIDQGGLTLPTRDNYLNETMDDKVLSAYLEYMTKIGVLLGGEEKNVRTQMKAVIEFETELAKIMSPQEDRRDEEKLYNNMELDKVQGRPPFINWHAFFSNAMENITRKISKKEKVVVYAPEYLEKLNDIIRNYTNTTDGKIILNNYLVWQTVRSMTSYLSKAFRDAYKGLRKALVGSEGGEKPWRYCVTDTNNVIGFAIGAMFVREAFHGNSKPAAENMINQIRTAFKSNLKNLKWMDAETRRAAEKKADAISDMIGFPDYILNPEELDKKYKDLEIKEDEYFENNLRVNKYNLKSNLEKLDQPVNKTRWGMTPPTVNAYYTPTKNQIVFPAGILQAPFYDIGHPKSMNYGAMGVVMGHELTHAFDDQGREYDQNGNLHKWWNNQTIEAFKKRTQCVVDQYSNYTVDNKHVNGKQTLGENIADNGGLKAAYHAYLEWEQRNPRELPLPGLNFSHKQLFFLSFAQVWCSASTDEAIKLQLEKDPHAPPKFRVIGPLSNLQEFSTEFRCPLGSKMNPVHKCEVW.

Residues 1–44 lie on the Cytoplasmic side of the membrane; sequence MSFNFSRYSGAYTTTFSFLLLALLIVSAVLLSRPYAPALLHAEE. A helical; Signal-anchor for type II membrane protein membrane pass occupies residues 45–65; the sequence is AYCVSMSCVTAAASVLSLMDA. The Peptidase M13 domain occupies 46–727; the sequence is YCVSMSCVTA…MNPVHKCEVW (682 aa). 5 disulfides stabilise this stretch: C47–C52, C70–C712, C78–C672, C134–C392, and C601–C724. Over 66-727 the chain is Extracellular; that stretch reads TADPCSDFYQ…MNPVHKCEVW (662 aa). N-linked (GlcNAc...) asparagine glycans are attached at residues N138, N160, N164, N169, N222, N309, N337, N340, and N511. Residue H564 coordinates Zn(2+). E565 is an active-site residue. H568 contacts Zn(2+). N589 and N608 each carry an N-linked (GlcNAc...) asparagine glycan. E624 serves as a coordination point for Zn(2+). Residue D628 is the Proton donor of the active site. A glycan (N-linked (GlcNAc...) asparagine) is linked at N656.

Belongs to the peptidase M13 family. Requires Zn(2+) as cofactor. As to expression, highly expressed in brain and midgut, and to a lesser extent in fat body, ovaries, testes and haemocytes.

Its subcellular location is the cell membrane. The chain is Endothelin-converting enzyme homolog from Locusta migratoria (Migratory locust).